A 530-amino-acid chain; its full sequence is Autoinducer-2 kinase (530 aa).

This sequence belongs to the FGGY kinase family.

The protein resides in the cytoplasm. It catalyses the reaction (S)-4,5-dihydroxypentane-2,3-dione + ATP = (2S)-2-hydroxy-3,4-dioxopentyl phosphate + ADP + H(+). Catalyzes the phosphorylation of autoinducer-2 (AI-2) to phospho-AI-2, which subsequently inactivates the transcriptional regulator LsrR and leads to the transcription of the lsr operon. Phosphorylates the ring-open form of (S)-4,5-dihydroxypentane-2,3-dione (DPD), which is the precursor to all AI-2 signaling molecules, at the C5 position. The sequence is that of Autoinducer-2 kinase from Salmonella paratyphi A (strain ATCC 9150 / SARB42).